The chain runs to 293 residues: Pseudouridine-5'-phosphate glycosidase (293 aa).

Glutamate 21 functions as the Proton donor in the catalytic mechanism. Residues lysine 81 and valine 101 each contribute to the substrate site. Mn(2+) is bound at residue aspartate 130. Substrate is bound at residue 132–134 (SQD). Lysine 151 functions as the Nucleophile in the catalytic mechanism.

It belongs to the pseudouridine-5'-phosphate glycosidase family. In terms of assembly, homotrimer. The cofactor is Mn(2+).

It catalyses the reaction D-ribose 5-phosphate + uracil = psi-UMP + H2O. Functionally, catalyzes the reversible cleavage of pseudouridine 5'-phosphate (PsiMP) to ribose 5-phosphate and uracil. Functions biologically in the cleavage direction, as part of a pseudouridine degradation pathway. The sequence is that of Pseudouridine-5'-phosphate glycosidase from Thermosipho africanus (strain TCF52B).